The following is a 737-amino-acid chain: Dynein axonemal intermediate chain 7 homolog (737 aa).

The span at 1–15 (MPPKSPNRSGKSTPT) shows a compositional bias: polar residues. Disordered stretches follow at residues 1 to 61 (MPPK…ERRA), 274 to 362 (KKVK…DDEE), and 410 to 452 (STVK…QQPP). 3 stretches are compositionally biased toward basic and acidic residues: residues 18-61 (RPGE…ERRA), 276-316 (VKDE…EGRQ), and 333-349 (EETKKDENEGEKEDAVK). Polar residues-rich tracts occupy residues 417 to 429 (DNPNTGRSSSRVA) and 441 to 451 (PSKTPLEQQQP).

Belongs to the DNAI7 family.

The chain is Dynein axonemal intermediate chain 7 homolog (AXP83.9) from Ciona intestinalis (Transparent sea squirt).